Consider the following 772-residue polypeptide: Rho guanine nucleotide exchange factor 6 (772 aa).

Positions 1–111 constitute a Calponin-homology (CH) domain; it reads MNPEERVVTW…TLLAVNKATE (111 aa). The interval 115 to 158 is disordered; sequence SERPCGRSSSLSATTSSQTNPQAAVPSTTPEQQSEEKAAEMTEN. Residues 122 to 133 show a composition bias toward low complexity; it reads SSSLSATTSSQT. Position 126 is a phosphoserine (Ser-126). A Phosphothreonine modification is found at Thr-133. Residues 134–146 show a composition bias toward polar residues; it reads NPQAAVPSTTPEQ. The 60-residue stretch at 160–219 folds into the SH3 domain; sequence SHQLIVKARFNFKQTNEDELSVCKGDIIYVTRVEEGGWWEGTLNGRTGWFPSNYVREIKP. Ser-225 is modified (phosphoserine). A DH domain is found at 241–421; the sequence is YYTVVLQNIL…KSLMGQCQDL (181 aa). The 106-residue stretch at 443-548 folds into the PH domain; the sequence is DIKTLGNVIF…WMEQLNRLTK (106 aa). Ser-488 carries the post-translational modification Phosphoserine. The segment covering 557-573 has biased composition (low complexity); it reads SKTSSSSCSTHSSFSST. The tract at residues 557–581 is disordered; that stretch reads SKTSSSSCSTHSSFSSTGQPRGPLE. Residues Ser-640 and Ser-680 each carry the phosphoserine modification.

In terms of assembly, interacts with PAK kinases through the SH3 domain. Interacts with GIT1. Interacts with PARVB. Component of cytoplasmic complexes, which also contain PXN, GIT1 and PAK1. Interacts with BIN2. Identified in a complex with BIN2 and GIT2. Interacts with PARVG; the guanine nucleotide exchange factor activity of ARHGEF6 is essential for PARVG-induced enhancement of cell spreading.

The protein resides in the cell projection. It is found in the lamellipodium. Acts as a RAC1 guanine nucleotide exchange factor (GEF). The protein is Rho guanine nucleotide exchange factor 6 (Arhgef6) of Rattus norvegicus (Rat).